The following is a 1938-amino-acid chain: MSSDAEMAIFGEAAPYLRKPEKERIEAQNRPFDSKKACFVADNKEMYVKGMIQTRENDKVIVKTLDDRMLTLNNDQVFPMNPPKFDKIEDMAMMTHLHEPAVLYNLKERYAAWMIYTYSGLFCVTVNPYKWLPVYKPEVVAAYRGKKRQEAPPHIFSISDNAYQFMLTDRDNQSILITGESGAGKTVNTKRVIQYFATIAVTGDKKKETQPGKMQGTLEDQIIQANPLLEAFGNAKTVRNDNSSRFGKFIRIHFGATGKLASADIETYLLEKSRVTFQLSSERSYHIFYQIMSNKKPELIDLLLISTNPFDFPFVSQGEVTVASIDDSEELLATDNAIDILGFSSEEKVGIYKLTGAVMHYGNMKFKQKQREEQAEPDGTEVADKAGYLMGLNSAEMLKGLCCPRVKVGNEYVTKGQNVQQVTNSVGALAKAVYEKMFLWMVTRINQQLDTKQPRQYFIGVLDIAGFEIFDFNSLEQLCINFTNEKLQQFFNHHMFVLEQEEYKKEGIEWEFIDFGMDLAACIELIEKPMGIFSILEEECMFPKATDTSFKNKLYDQHLGKSNNFQKPKPAKGKAEAHFSLVHYAGTVDYNIAGWLDKNKDPLNETVVGLYQKSSLKLLSFLFSNYAGAETGDSGGSKKGGKKKGSSFQTVSAVFRENLNKLMTNLRSTHPHFVRCLIPNETKTPGVMDHYLVMHQLRCNGVLEGIRICRKGFPSRILYADFKQRYRILNASAIPEGQFIDSKNASEKLLNSIDVDREQFRFGNTKVFFKAGLLGLLEEMRDEKLVTLMTSTQAVCRGYLMRVEFKKMMERRDSIFCIQYNIRSFMNVKHWPWMNLFFKIKPLLKSAEAEKEMATMKEDFERTKEELARSEARRKELEEKMVSLLQEKNDLQLQVQSETENLMDAEERCEGLIKSKILLEAKVKELTERLEEEEEMNSELVAKKRNLEDKCSSLKRDIDDLELTLTKVEKEKHATENKVKNLSEEMTALEENISKLTKEKKSLQEAHQQTLDDLQVEEDKVNGLIKINAKLEQQTDDLEGSLEQEKKLRADLERAKRKLEGDLKMSQESIMDLENDKQQIEEKLKKKEFELSQLQAKIDDEQVHSLQFQKKIKELQARIEELEEEIEAEHTLRAKIEKQRSDLARELEEISERLEEASGATSAQIEMNKKREAEFQKMRRDLEEATLQHEATAATLRKKQADSVAELGEQIDNLQRVKQKLEKEKSELKMEIDDMASNIEALSKSKSNIERTCRTVEDQFSEIKAKDEQQTQLIHDLNMQKARLQTQNGELSHRVEEKESLISQLTKSKQALTQQLEELKRQMEEETKAKNAMAHALQSSRHDCDLLREQYEEEQEAKAELQRALSKANSEVAQWRTKYETDAIQRTEELEEAKKKLAQRLQEAEENTETANSKCASLEKTKQRLQGEVEDLMRDLERSHTACATLDKKQRNFDKVLAEWKQKLDESQAELEAAQKESRSLSTELFKMRNAYEEVVDQLETLRRENKNLQEEISDLTEQIAETGKNLQEAEKTKKLVEQEKSDLQVALEEVEGSLEHEESKILRVQLELSQVKSELDRKVIEKDEEIEQLKRNSQRAAEALQSVLDAEIRSRNDALRLKKKMEGDLNEMEIQLGHSNRQMAETQKHLRTVQGQLKDSQLHLDDALRSNEDLKEQLAIVERRNGLLLEELEEMKVALEQTERTRRLSEQELLDASDRVQLLHSQNTSLINTKKKLEADIAQCQAEVENSIQESRNAEEKAKKAITDAAMMAEELKKEQDTSAHLERMKKNLEQTVKDLQHRLDEAEQLALKGGKKQIQKLENRVRELENELDVEQKRGAEALKGAHKYERKVKEMTYQAEEDHKNILRLQDLVDKLQAKVKSYKRQAEEAEEQANTQLSRCRRVQHELEEAAERADIAESQVNKLRAKSRDVGSQKMEE.

The Myosin N-terminal SH3-like domain occupies 33 to 82; sequence DSKKACFVADNKEMYVKGMIQTRENDKVIVKTLDDRMLTLNNDQVFPMNP. One can recognise a Myosin motor domain in the interval 86–782; it reads DKIEDMAMMT…LLGLLEEMRD (697 aa). Lysine 130 carries the post-translational modification N6,N6,N6-trimethyllysine. Position 179-186 (179-186) interacts with ATP; the sequence is GESGAGKT. Actin-binding stretches follow at residues 659-681 and 761-775; these read LNKL…IPNE and RFGN…GLLG. Residues 785-814 form the IQ domain; the sequence is LVTLMTSTQAVCRGYLMRVEFKKMMERRDS. A coiled-coil region spans residues 843-1938; the sequence is LLKSAEAEKE…RDVGSQKMEE (1096 aa). Positions 1917 to 1938 are disordered; that stretch reads AESQVNKLRAKSRDVGSQKMEE. The span at 1927–1938 shows a compositional bias: basic and acidic residues; sequence KSRDVGSQKMEE.

Belongs to the TRAFAC class myosin-kinesin ATPase superfamily. Myosin family. In terms of assembly, muscle myosin is a hexameric protein that consists of 2 heavy chain subunits (MHC), 2 alkali light chain subunits (MLC) and 2 regulatory light chain subunits (MLC-2). Specifically expressed in extraocular and laryngeal muscles.

The protein resides in the cytoplasm. The protein localises to the myofibril. Functionally, fast twitching myosin mediating the high-velocity and low-tension contractions of specific striated muscles. This is Myosin-13 (MYH13) from Homo sapiens (Human).